We begin with the raw amino-acid sequence, 387 residues long: Sedoheptulose-1,7-bisphosphatase, chloroplastic (387 aa).

Cys109 and Cys114 form a disulfide bridge. Asp120, Glu149, Asp170, Leu172, and Asp173 together coordinate Mg(2+). Substrate contacts are provided by residues 173 to 176 (DGSS), Tyr284, and Lys314. Glu320 provides a ligand contact to Mg(2+).

The protein belongs to the FBPase class 1 family. Homodimer. The cofactor is Mg(2+).

It is found in the plastid. Its subcellular location is the chloroplast. The catalysed reaction is D-sedoheptulose 1,7-bisphosphate + H2O = D-sedoheptulose 7-phosphate + phosphate. It functions in the pathway carbohydrate biosynthesis; Calvin cycle. This Spinacia oleracea (Spinach) protein is Sedoheptulose-1,7-bisphosphatase, chloroplastic.